The sequence spans 741 residues: Photosystem I P700 chlorophyll a apoprotein A2 (741 aa).

Topologically, residues 2–38 are cytoplasmic; that stretch reads ATKFPKFSQDLAQDPTTRRIWYAIAMAHDFESHDGMT. The helical transmembrane segment at 39–70 threads the bilayer; it reads EENLYQKIFASHFGHLAIIFLWVSGSLFHVAW. The Lumenal, thylakoid portion of the chain corresponds to 71–131; sequence QGNFEQWVQD…HWWYTIGMRT (61 aa). Residues 132–156 form a helical membrane-spanning segment; sequence NGDLYQGAIFLLILASLALFAGWLH. At 157–172 the chain is on the cytoplasmic side; sequence LQPKFRPSLSWFKNAE. Residues 173 to 195 traverse the membrane as a helical segment; that stretch reads SRLNHHLAGLFGVSSLAWAGHLI. Topologically, residues 196–269 are lumenal, thylakoid; that stretch reads HVAIPESRGQ…GFHPQTESLW (74 aa). A helical membrane pass occupies residues 270-287; the sequence is LTDMAHHHLAIAVLFIVA. Over 288–334 the chain is Cytoplasmic; that stretch reads GHMYRTQFGIGHSIKEMMDAKDFFGTKVEGPFNMPHQGIYETYNNSL. The helical transmembrane segment at 335-358 threads the bilayer; it reads HFQLGWHLACLGVITSLVAQHMYS. Residues 359–368 are Lumenal, thylakoid-facing; the sequence is LPPYAFIAQD. Residues 369 to 400 form a helical membrane-spanning segment; the sequence is HTTMAALYTHHQYIAGFLMVGAFAHGAIFLVR. Residues 401-419 lie on the Cytoplasmic side of the membrane; the sequence is DYDPAQNKGNVLDRVLQHK. A helical transmembrane segment spans residues 420–449; that stretch reads EAIISHLSWVSLFLGFHTLGLYVHNDVVVA. The Lumenal, thylakoid portion of the chain corresponds to 450–520; sequence FGTPEKQILI…GTNSLFLTIG (71 aa). The helical transmembrane segment at 521–545 threads the bilayer; the sequence is PGDFLVHHAIALGLHTTTLILVKGA. Over 546 to 578 the chain is Cytoplasmic; that stretch reads LDARGSKLMPDKKDFGYAFPCDGPGRGGTCDIS. Cys-566 and Cys-575 together coordinate [4Fe-4S] cluster. A helical membrane pass occupies residues 579–610; the sequence is AWDAFYLAMFWMLNTIGWVTFYWHWKHLGVWE. Residues 611–650 are Lumenal, thylakoid-facing; sequence GNVAQFNESSTYLMGWLRDYLWLNSSQLINGYNPFGTNNL. The helical transmembrane segment at 651–672 threads the bilayer; the sequence is SVWAWMFLFGHLVWATGFMFLI. Chlorophyll a is bound by residues His-661, Met-669, and Tyr-677. Residues 673 to 708 are Cytoplasmic-facing; it reads SWRGYWQELIETLVWAHERTPLANLVRWKDKPVALS. Residue Trp-678 participates in phylloquinone binding. A helical membrane pass occupies residues 709–737; it reads IVQARLVGLAHFSVGYILTYAAFLIASTA. Topologically, residues 738-741 are lumenal, thylakoid; sequence AKFG.

This sequence belongs to the PsaA/PsaB family. In terms of assembly, the PsaA/B heterodimer binds the P700 chlorophyll special pair and subsequent electron acceptors. PSI consists of a core antenna complex that captures photons, and an electron transfer chain that converts photonic excitation into a charge separation. The cyanobacterial PSI reaction center is composed of one copy each of PsaA,B,C,D,E,F,I,J,K,L,M and X, and forms trimeric complexes. It depends on PSI electron transfer chain: 5 chlorophyll a, 1 chlorophyll a', 2 phylloquinones and 3 4Fe-4S clusters. PSI core antenna: 90 chlorophyll a, 22 carotenoids, 3 phospholipids and 1 galactolipid. P700 is a chlorophyll a/chlorophyll a' dimer, A0 is one or more chlorophyll a, A1 is one or both phylloquinones and FX is a shared 4Fe-4S iron-sulfur center. as a cofactor.

It is found in the cellular thylakoid membrane. The catalysed reaction is reduced [plastocyanin] + hnu + oxidized [2Fe-2S]-[ferredoxin] = oxidized [plastocyanin] + reduced [2Fe-2S]-[ferredoxin]. PsaA and PsaB bind P700, the primary electron donor of photosystem I (PSI), as well as the electron acceptors A0, A1 and FX. PSI is a plastocyanin/cytochrome c6-ferredoxin oxidoreductase, converting photonic excitation into a charge separation, which transfers an electron from the donor P700 chlorophyll pair to the spectroscopically characterized acceptors A0, A1, FX, FA and FB in turn. Oxidized P700 is reduced on the lumenal side of the thylakoid membrane by plastocyanin or cytochrome c6. The polypeptide is Photosystem I P700 chlorophyll a apoprotein A2 (psaB) (Thermosynechococcus vestitus (strain NIES-2133 / IAM M-273 / BP-1)).